The primary structure comprises 156 residues: Small ribosomal subunit protein uS7 (156 aa).

Belongs to the universal ribosomal protein uS7 family. In terms of assembly, part of the 30S ribosomal subunit. Contacts proteins S9 and S11.

Its function is as follows. One of the primary rRNA binding proteins, it binds directly to 16S rRNA where it nucleates assembly of the head domain of the 30S subunit. Is located at the subunit interface close to the decoding center, probably blocks exit of the E-site tRNA. The protein is Small ribosomal subunit protein uS7 of Brucella abortus (strain S19).